Reading from the N-terminus, the 365-residue chain is Serine protease 40 (365 aa).

The N-terminal stretch at 1-34 is a signal peptide; it reads MCGIRAKKSGLGGYGAGLLAALLGVSFLSQHAQT. A glycan (N-linked (GlcNAc...) asparagine) is linked at Asn-44. A Peptidase S1 domain is found at 69–313; that stretch reads IYGGQIAGAE…FDKWIKDNKK (245 aa). Cys-94 and Cys-110 are disulfide-bonded. Active-site charge relay system residues include His-109 and Asp-159. Intrachain disulfides connect Cys-193–Cys-270, Cys-226–Cys-249, and Cys-260–Cys-288. Ser-264 serves as the catalytic Charge relay system. The tract at residues 312–343 is disordered; the sequence is KKSSSNSKPGESPHHPGSPENENPEGDNKNQG.

It belongs to the peptidase S1 family. As to expression, expressed in testis. More specifically, abundantly expressed in the haploid round spermatid.

The protein resides in the cytoplasmic vesicle. Its subcellular location is the secretory vesicle. The protein localises to the acrosome. It localises to the secreted. Functionally, may play an important role in the sperm/egg interaction; released during the acrosome reaction. The protein is Serine protease 40 (Prss40) of Mus musculus (Mouse).